Reading from the N-terminus, the 244-residue chain is 3-deoxy-manno-octulosonate cytidylyltransferase (244 aa).

The protein belongs to the KdsB family.

It localises to the cytoplasm. It carries out the reaction 3-deoxy-alpha-D-manno-oct-2-ulosonate + CTP = CMP-3-deoxy-beta-D-manno-octulosonate + diphosphate. The protein operates within nucleotide-sugar biosynthesis; CMP-3-deoxy-D-manno-octulosonate biosynthesis; CMP-3-deoxy-D-manno-octulosonate from 3-deoxy-D-manno-octulosonate and CTP: step 1/1. It participates in bacterial outer membrane biogenesis; lipopolysaccharide biosynthesis. Its function is as follows. Activates KDO (a required 8-carbon sugar) for incorporation into bacterial lipopolysaccharide in Gram-negative bacteria. This Anaeromyxobacter sp. (strain Fw109-5) protein is 3-deoxy-manno-octulosonate cytidylyltransferase.